A 347-amino-acid chain; its full sequence is MIRVSIIGATGYTGIELVRLLANHPEVELSSLVSRNASNKPLSDIYPQFIGRIDLKFSEYDCQAICQNSDIVFTALPHGISQEIVGELYNCGVKIIDLSGDFRYKDSAIYEKWYRENHHYPHLLEKAVYGLVEINRNSIKRSSLVANPGCYPTASLLGLWPVISENLINLNTIIIDAKSGVSGAGKGLKRGSHFVEVDENIKGYSIGSHRHTSEIEEIIKTFSGNQKAIVSFTPHLVPMKRGILATIYVKLKQSISERALRELYHKYYPDHGFIKVLPRDIFPETKYVVGTNYCYIGLKYDTRTERLVIISAIDNLVKGAAGQAIQNMNVMFNLPEYMGLKQVGVFP.

Cys-150 is a catalytic residue.

Belongs to the NAGSA dehydrogenase family. Type 1 subfamily.

Its subcellular location is the cytoplasm. The enzyme catalyses N-acetyl-L-glutamate 5-semialdehyde + phosphate + NADP(+) = N-acetyl-L-glutamyl 5-phosphate + NADPH + H(+). It functions in the pathway amino-acid biosynthesis; L-arginine biosynthesis; N(2)-acetyl-L-ornithine from L-glutamate: step 3/4. Functionally, catalyzes the NADPH-dependent reduction of N-acetyl-5-glutamyl phosphate to yield N-acetyl-L-glutamate 5-semialdehyde. This Halothermothrix orenii (strain H 168 / OCM 544 / DSM 9562) protein is N-acetyl-gamma-glutamyl-phosphate reductase.